We begin with the raw amino-acid sequence, 129 residues long: UPF0325 protein Ent638_0703 (129 aa).

It belongs to the UPF0325 family.

This chain is UPF0325 protein Ent638_0703, found in Enterobacter sp. (strain 638).